We begin with the raw amino-acid sequence, 320 residues long: Solute carrier family 25 member 33 (320 aa).

Solcar repeat units follow at residues Glu-9–Gln-118, Asn-126–Cys-213, and Ser-231–Leu-315. 6 helical membrane-spanning segments follow: residues Leu-12–Leu-32, Val-49–Val-65, Gly-121–Val-141, Leu-190–Leu-210, Phe-233–Pro-253, and Gln-298–Glu-318.

The protein belongs to the mitochondrial carrier (TC 2.A.29) family.

The protein localises to the mitochondrion inner membrane. It catalyses the reaction UTP(in) + UDP(out) = UTP(out) + UDP(in). The catalysed reaction is dUTP(out) + UTP(in) = dUTP(in) + UTP(out). The enzyme catalyses 5-methyl-UTP(out) + UTP(in) = 5-methyl-UTP(in) + UTP(out). It carries out the reaction 5-methyl-UDP(out) + UTP(in) = 5-methyl-UDP(in) + UTP(out). It catalyses the reaction UTP(in) + CTP(out) = UTP(out) + CTP(in). The catalysed reaction is CDP(out) + UTP(in) = CDP(in) + UTP(out). The enzyme catalyses dCTP(out) + UTP(in) = dCTP(in) + UTP(out). It carries out the reaction dCDP(out) + UTP(in) = dCDP(in) + UTP(out). It catalyses the reaction UTP(in) + GTP(out) = UTP(out) + GTP(in). The catalysed reaction is UTP(in) + GDP(out) = UTP(out) + GDP(in). The enzyme catalyses dGTP(out) + UTP(in) = dGTP(in) + UTP(out). It carries out the reaction dGDP(out) + UTP(in) = dGDP(in) + UTP(out). It catalyses the reaction ITP(out) + UTP(in) = ITP(in) + UTP(out). Its function is as follows. Mitochondrial transporter that imports/exports pyrimidine nucleotides into and from mitochondria. Selectively transports uridine, thymidine, guanosine, cytosine and inosine (deoxy)nucleoside di- and triphosphates by an antiport mechanism. May import (deoxy)nucleoside triphosphates in exchange for intramitochondrial (deoxy)nucleoside diphosphates, thus providing precursors necessary for de novo synthesis of mitochondrial DNA and RNA while exporting products of their catabolism. Participates in mitochondrial genome maintenance, regulation of mitochondrial membrane potential and mitochondrial respiration. Upon INS or IGF1 stimulation regulates cell growth and proliferation by controlling mitochondrial DNA replication and transcription, the ratio of mitochondria-to nuclear-encoded components of the electron transport chain resulting in control of mitochondrial ROS production. Participates in dendritic cell endocytosis and may associate with mitochondrial oxidative phosphorylation. The chain is Solute carrier family 25 member 33 (Slc25a33) from Mus musculus (Mouse).